Reading from the N-terminus, the 608-residue chain is MLLDEIKRMSYDELKRLAEDIRKKITEVVLKNGGHLASNLGTIELTLALYRVFDPREDAIIWDTGHQAYTHKILTGRDELFHTIRTFGGLSGFVTRRESPLDWFGTGHAGTSIAAGLGFEKAFELLGEKRHVVVVIGDGALTSGMALEALNQLKNINSKMKIILNDNGMSISPNVGGLAYHLSKLRTSPIYLKGKKVLKKVLEKTEIGFEVEEEMKYLRDSLKGMIQGTNFFESLGLKYFGPFDGHNIELLEKVFKRIRDYDYSSVVHVVTKKGKGFTAAEKDPTKYHSASPSGKPKMLSYSDLLGHTLSGIAREDKKIVAITAAMADGTGLSIFQREHPDRFFDLGITEQTCVTFGAALGLHGMKPVVAIYSTFLQRAYDQIIHDVALQNAPVLFAIDRSGVVGEDGPTHHGLFDMNYLLSVPNMKIISPSSPEEFVSSLYTVLKHLDGPVAIRYPKESFYGEVEFFLENMKEIDLGWKILKRGREAAIIATGTILNEVLKIPLDVTVVNALTVKPLDTTVLKEIAREHDLIITVEEAMKIGGFGSFVAQRLQEMGWQGKIVNLGVEDIFVPHGSRKELLSMLGLDSEGLTKTVLTYIKARSREGKV.

Thiamine diphosphate-binding positions include His66 and 107–109; that span reads GHA. Asp138 contributes to the Mg(2+) binding site. Residues 139 to 140, Asn167, Phe277, and Glu350 contribute to the thiamine diphosphate site; that span reads GA. Position 167 (Asn167) interacts with Mg(2+).

It belongs to the transketolase family. DXPS subfamily. In terms of assembly, homodimer. It depends on Mg(2+) as a cofactor. Thiamine diphosphate serves as cofactor.

The catalysed reaction is D-glyceraldehyde 3-phosphate + pyruvate + H(+) = 1-deoxy-D-xylulose 5-phosphate + CO2. The protein operates within metabolic intermediate biosynthesis; 1-deoxy-D-xylulose 5-phosphate biosynthesis; 1-deoxy-D-xylulose 5-phosphate from D-glyceraldehyde 3-phosphate and pyruvate: step 1/1. Its function is as follows. Catalyzes the acyloin condensation reaction between C atoms 2 and 3 of pyruvate and glyceraldehyde 3-phosphate to yield 1-deoxy-D-xylulose-5-phosphate (DXP). This is 1-deoxy-D-xylulose-5-phosphate synthase from Thermotoga sp. (strain RQ2).